The sequence spans 569 residues: Probable diguanylate cyclase DgcQ (569 aa).

2 consecutive transmembrane segments (helical) span residues 25–45 (LGPG…STLL) and 365–385 (IALT…WYVI). In terms of domain architecture, GGDEF spans 433–568 (HPFSVIQVDL…GRNRVCASDN (136 aa)). Aspartate 441 contacts Mg(2+). Substrate is bound by residues asparagine 449, histidine 454, and aspartate 458. Glutamate 484 is a binding site for Mg(2+). Glutamate 484 functions as the Proton acceptor in the catalytic mechanism.

Homodimer. Mg(2+) is required as a cofactor.

The protein resides in the cell inner membrane. The catalysed reaction is 2 GTP = 3',3'-c-di-GMP + 2 diphosphate. Its pathway is glycan metabolism; bacterial cellulose biosynthesis. The protein operates within purine metabolism; 3',5'-cyclic di-GMP biosynthesis. Its function is as follows. Catalyzes the synthesis of cyclic-di-GMP (c-di-GMP) via the condensation of 2 GTP molecules. Cyclic-di-GMP is a second messenger which controls cell surface-associated traits in bacteria. Involved in the regulation of cellulose production. This chain is Probable diguanylate cyclase DgcQ, found in Shigella sonnei (strain Ss046).